We begin with the raw amino-acid sequence, 221 residues long: Late embryogenesis abundant protein, group 3 (221 aa).

Positions 1 to 221 (MASHQDKASY…KDSSTITRDH (221 aa)) are disordered. Basic and acidic residues predominate over residues 33–42 (TAQHAKDRAA). The segment covering 43–52 (DAAGHAAGKG) has biased composition (low complexity). Basic and acidic residues-rich tracts occupy residues 53–63 (QDAKEATKQKA) and 72–147 (KKTD…KQKA). The segment covering 212–221 (KDSSTITRDH) has biased composition (polar residues).

This sequence belongs to the LEA type 4 family.

This chain is Late embryogenesis abundant protein, group 3 (MGL3), found in Zea mays (Maize).